Reading from the N-terminus, the 77-residue chain is MAVGVSPGELRELSDDELIERLRESKEELFNLRFQMATGQLSNNRRLRVVRQEIARVYTVLRERELGLASGPAGEES.

This sequence belongs to the universal ribosomal protein uL29 family.

The chain is Large ribosomal subunit protein uL29 from Mycobacterium sp. (strain JLS).